A 611-amino-acid chain; its full sequence is Chaperone protein HscA (611 aa).

It belongs to the heat shock protein 70 family.

Its function is as follows. Chaperone involved in the maturation of iron-sulfur cluster-containing proteins. Has a low intrinsic ATPase activity which is markedly stimulated by HscB. Involved in the maturation of IscU. The chain is Chaperone protein HscA from Buchnera aphidicola subsp. Acyrthosiphon pisum (strain 5A).